The sequence spans 150 residues: MSNKVGLIHSLKDGQSYMEIWPVRKELGAIFPEQRIIKATRFGIKVMPAVAAISVLTQMAFNNYNALPQSIVVALFAISLPLQGIWWLGARSNTKLPPSLASWYRELHQKIVETGFALEPVKARPRYKELAIILNRAFRQLDKSSLERWF.

2 consecutive transmembrane segments (helical) span residues 42–62 (FGIK…MAFN) and 70–90 (SIVV…WLGA).

This sequence belongs to the UPF0208 family.

The protein resides in the cell inner membrane. The protein is UPF0208 membrane protein VP2081 of Vibrio parahaemolyticus serotype O3:K6 (strain RIMD 2210633).